The following is a 521-amino-acid chain: Beta-glucosidase 11 (521 aa).

A signal peptide spans 1 to 23 (MKLLSNSLMFLPLLALALTAVSS). A beta-D-glucoside contacts are provided by residues glutamine 45, histidine 144, and 189–190 (NE). The active-site Proton donor is glutamate 190. Cysteine 209 and cysteine 217 are oxidised to a cystine. Residues asparagine 216 and asparagine 221 are each glycosylated (N-linked (GlcNAc...) asparagine). Tyrosine 356 is an a beta-D-glucoside binding site. N-linked (GlcNAc...) asparagine glycans are attached at residues asparagine 364 and asparagine 388. A beta-D-glucoside is bound by residues glutamate 422, tryptophan 466, and phenylalanine 482. Catalysis depends on glutamate 422, which acts as the Nucleophile.

This sequence belongs to the glycosyl hydrolase 1 family.

It carries out the reaction Hydrolysis of terminal, non-reducing beta-D-glucosyl residues with release of beta-D-glucose.. This chain is Beta-glucosidase 11, found in Arabidopsis thaliana (Mouse-ear cress).